We begin with the raw amino-acid sequence, 393 residues long: Protein TsgA (393 aa).

Transmembrane regions (helical) follow at residues 11 to 31 (WISF…GMVM), 51 to 71 (FLNA…EIIP), 78 to 98 (FGFI…SLAL), 101 to 121 (AAMF…TFLI), 134 to 154 (LLFT…VAAF), 162 to 182 (WYWV…LTFG), 206 to 226 (IGVL…LGFI), 245 to 265 (ALVS…SFIL), 273 to 293 (ILTV…TGTQ), 298 to 318 (WFIL…ITLG), 332 to 352 (FILT…GPIV), and 361 to 381 (LLTA…LGFV).

This sequence belongs to the major facilitator superfamily. TsgA family.

It is found in the cell inner membrane. This is Protein TsgA from Salmonella agona (strain SL483).